The chain runs to 227 residues: LexA repressor (227 aa).

Residues 25-45 (FDEMKDALDLRSKSGIHRLIT) constitute a DNA-binding region (H-T-H motif). Catalysis depends on for autocatalytic cleavage activity residues Ser-148 and Lys-186.

Belongs to the peptidase S24 family. As to quaternary structure, homodimer.

It carries out the reaction Hydrolysis of Ala-|-Gly bond in repressor LexA.. Its function is as follows. Represses a number of genes involved in the response to DNA damage (SOS response), including recA and lexA. In the presence of single-stranded DNA, RecA interacts with LexA causing an autocatalytic cleavage which disrupts the DNA-binding part of LexA, leading to derepression of the SOS regulon and eventually DNA repair. This Cereibacter sphaeroides (strain ATCC 17029 / ATH 2.4.9) (Rhodobacter sphaeroides) protein is LexA repressor.